The sequence spans 463 residues: Probable multidrug resistance protein YoeA (463 aa).

Transmembrane regions (helical) follow at residues 24-44 (LFLV…LVGM), 56-76 (VAAV…TIGI), 106-126 (FTFL…LDIL), 143-163 (ARIL…TTFL), 177-197 (IVST…MFGF), 202-222 (IYGS…VLMV), 256-276 (VPAS…ISFV), 293-313 (VASY…IFAA), 330-350 (VGIW…YVFS), 370-390 (LLMI…ISAT), 397-417 (VLWP…PVAF), and 427-447 (ILGV…LIYG).

This sequence belongs to the multi antimicrobial extrusion (MATE) (TC 2.A.66.1) family.

The protein localises to the cell membrane. The chain is Probable multidrug resistance protein YoeA (yoeA) from Bacillus subtilis (strain 168).